The primary structure comprises 339 residues: Anthranilate phosphoribosyltransferase (339 aa).

5-phospho-alpha-D-ribose 1-diphosphate-binding positions include G79, 82–83 (GD), T87, 89–92 (NVST), 107–115 (KHGNRSVSS), and S119. An anthranilate-binding site is contributed by G79. Residue S91 coordinates Mg(2+). Residue N110 coordinates anthranilate. R165 contributes to the anthranilate binding site. Residues D224 and E225 each contribute to the Mg(2+) site.

The protein belongs to the anthranilate phosphoribosyltransferase family. As to quaternary structure, homodimer. Mg(2+) serves as cofactor.

The catalysed reaction is N-(5-phospho-beta-D-ribosyl)anthranilate + diphosphate = 5-phospho-alpha-D-ribose 1-diphosphate + anthranilate. It functions in the pathway amino-acid biosynthesis; L-tryptophan biosynthesis; L-tryptophan from chorismate: step 2/5. Catalyzes the transfer of the phosphoribosyl group of 5-phosphorylribose-1-pyrophosphate (PRPP) to anthranilate to yield N-(5'-phosphoribosyl)-anthranilate (PRA). This is Anthranilate phosphoribosyltransferase from Caldivirga maquilingensis (strain ATCC 700844 / DSM 13496 / JCM 10307 / IC-167).